The following is a 479-amino-acid chain: GMP reductase (479 aa).

CBS domains are found at residues 96 to 153 (VLDT…VRDI) and 154 to 212 (AVTD…ATDS). NADP(+) contacts are provided by residues 246–248 (DTA) and 296–298 (GVG). Cysteine 303 serves as the catalytic Thioimidate intermediate.

Belongs to the IMPDH/GMPR family. GuaB1 subfamily. A monovalent cation serves as cofactor.

The catalysed reaction is IMP + NH4(+) + NADP(+) = GMP + NADPH + 2 H(+). It participates in purine metabolism; IMP biosynthesis via salvage pathway. Its function is as follows. Involved in the purine-salvage pathway. Catalyzes the NADPH-dependent conversion of GMP to IMP. This is GMP reductase from Mycobacterium bovis (strain ATCC BAA-935 / AF2122/97).